The following is a 306-amino-acid chain: Probable rRNA-processing protein EBP2 (306 aa).

Met-1 is subject to N-acetylmethionine. 3 disordered regions span residues 1 to 20, 75 to 103, and 150 to 169; these read MDTP…LASD, GPVP…DDFQ, and IRQK…KAKQ. Thr-3 bears the Phosphothreonine mark. A phosphoserine mark is found at Ser-7, Ser-9, Ser-11, and Ser-13. The segment covering 81-90 has biased composition (polar residues); sequence SETQPTPQNQ. Over residues 91–103 the composition is skewed to basic and acidic residues; that stretch reads DQKKGVNPEDDFQ. Lys-93 participates in a covalent cross-link: Glycyl lysine isopeptide (Lys-Gly) (interchain with G-Cter in SUMO2). Positions 135 to 171 form a coiled coil; it reads DYFAEMAKSDQQMQKIRQKLQTKQAAMEKSEKAKQLR. Glycyl lysine isopeptide (Lys-Gly) (interchain with G-Cter in SUMO2) cross-links involve residues Lys-179 and Lys-218. Basic and acidic residues predominate over residues 213 to 224; the sequence is LEGDQKPVERSA. The segment at 213–306 is disordered; sequence LEGDQKPVER…ARQKLKSKAR (94 aa). Phosphoserine is present on residues Ser-264 and Ser-270. The segment covering 274–306 has biased composition (basic residues); the sequence is KVAHGKGSRRPGKKGANKRPGKRARQKLKSKAR.

The protein belongs to the EBP2 family. As to quaternary structure, interacts with WDR46.

It localises to the nucleus. The protein localises to the nucleolus. Required for the processing of the 27S pre-rRNA. The polypeptide is Probable rRNA-processing protein EBP2 (Ebna1bp2) (Mus musculus (Mouse)).